The sequence spans 167 residues: Ion-translocating oxidoreductase complex subunit B (167 aa).

The hydrophobic stretch occupies residues 1–22; the sequence is MITLIIFSFLSFLLGIILSFTA. Residues 28 to 87 enclose the 4Fe-4S domain; that stretch reads QEDPIVAIVNELLPQSQCAQCGYSGCYPYAKAIVENSEKINKCIPGGTDLISAISSVLSI. Residues cysteine 45, cysteine 48, cysteine 53, cysteine 70, cysteine 113, cysteine 116, cysteine 119, cysteine 123, cysteine 143, cysteine 146, cysteine 149, and cysteine 153 each contribute to the [4Fe-4S] cluster site. 4Fe-4S ferredoxin-type domains lie at 104–133 and 134–163; these read NTVLINESNCVGCSKCASFCPVDAIVGAPN and FIHTVLQEFCTGCNICLLHCPTNCIEIKKE.

This sequence belongs to the 4Fe4S bacterial-type ferredoxin family. RnfB subfamily. As to quaternary structure, the complex is composed of six subunits: RnfA, RnfB, RnfC, RnfD, RnfE and RnfG. It depends on [4Fe-4S] cluster as a cofactor.

The protein resides in the cell inner membrane. Its function is as follows. Part of a membrane-bound complex that couples electron transfer with translocation of ions across the membrane. The polypeptide is Ion-translocating oxidoreductase complex subunit B (Buchnera aphidicola subsp. Acyrthosiphon pisum (strain 5A)).